A 1151-amino-acid polypeptide reads, in one-letter code: Ankyrin and IPT/TIG repeat-containing protein C26H5.05 (1151 aa).

Disordered stretches follow at residues 77 to 104 (NLPSIAPPSLSHASSPNLSNSQDEAECL), 452 to 511 (KSRN…ENSR), and 516 to 535 (QLSASDSHSPNSKSTLKSVE). A compositionally biased stretch (polar residues) spans 87 to 98 (SHASSPNLSNSQ). The segment covering 452–463 (KSRNLTKSEKTG) has biased composition (basic and acidic residues). Composition is skewed to polar residues over residues 464–496 (KSNSQQAPSNHVLSKSNTVPNLVTGFPTRSDNP) and 517–532 (LSASDSHSPNSKSTLK). Residues 658 to 739 (PLISRIIPNK…SSEAPVMFTY (82 aa)) enclose the IPT/TIG domain. 2 ANK repeats span residues 861 to 890 (SGRSLLHLTAACGLSNASTFLCNAGCDVNK) and 894 to 923 (LGYTPLHYASLYDHKDICVNLLSNGAKPDV). The disordered stretch occupies residues 1041 to 1067 (PPPYSEFADDTTAQAGSSKRDSAISED). Basic and acidic residues predominate over residues 1058–1067 (SKRDSAISED). The chain crosses the membrane as a helical span at residues 1113–1133 (MDFMLFSFWLPALLLLSIFGL).

The protein resides in the vacuole membrane. This Schizosaccharomyces pombe (strain 972 / ATCC 24843) (Fission yeast) protein is Ankyrin and IPT/TIG repeat-containing protein C26H5.05.